A 451-amino-acid chain; its full sequence is CCAAT/enhancer-binding protein (451 aa).

Disordered stretches follow at residues Thr210–Asp236, Gln267–Asn298, and Leu328–Arg389. 3 stretches are compositionally biased toward low complexity: residues Glu218–Ser228, Ser268–Asn298, and Leu334–Gln350. A compositionally biased stretch (basic and acidic residues) spans Lys359 to Arg370. Residues Thr365–Leu428 form the bZIP domain. The tract at residues Arg369 to Lys398 is basic motif. The interval Leu400–Leu407 is leucine-zipper.

The protein belongs to the bZIP family. C/EBP subfamily. In terms of assembly, binds DNA as a dimer and can form stable heterodimers.

It is found in the nucleus. May be required for the expression of gene products mediating border cell migration. Among the DNA sequences that this protein binds with high affinity is a conserved site within the promoter of its gene. The protein is CCAAT/enhancer-binding protein (slbo) of Drosophila virilis (Fruit fly).